Here is a 155-residue protein sequence, read N- to C-terminus: MRKNRALKRTVLPDPVFNNTLVTRIINVIMKDGKKGLAQRILYGAFEIIEKRTNQQPLTVFEKAVDNVMPRLELKVRRIAGSNYQVPTEVPPDRRIALALRWIVIFANKRNEKTMLERVANEIIDAFNNTGASVKKKDDTHKMAEANKAFAHMRW.

The protein belongs to the universal ribosomal protein uS7 family. Part of the 30S ribosomal subunit. Contacts proteins S9 and S11.

In terms of biological role, one of the primary rRNA binding proteins, it binds directly to 16S rRNA where it nucleates assembly of the head domain of the 30S subunit. Is located at the subunit interface close to the decoding center, probably blocks exit of the E-site tRNA. This chain is Small ribosomal subunit protein uS7, found in Mycoplasma genitalium (strain ATCC 33530 / DSM 19775 / NCTC 10195 / G37) (Mycoplasmoides genitalium).